The primary structure comprises 338 residues: Probable beta-1,4-xylosyltransferase IRX9 (338 aa).

A disordered region spans residues 1-21 (MASAGGCKKKTGNSRSRSPRS). Residues 1–27 (MASAGGCKKKTGNSRSRSPRSPVVLRR) lie on the Cytoplasmic side of the membrane. The helical; Signal-anchor for type II membrane protein transmembrane segment at 28–46 (AMLHSSLCFLVGLLAGLAA) threads the bilayer. The Lumenal portion of the chain corresponds to 47-338 (PSDWPAAAGA…IMLWRIQTTL (292 aa)). 2 N-linked (GlcNAc...) asparagine glycosylation sites follow: asparagine 232 and asparagine 314.

This sequence belongs to the glycosyltransferase 43 family.

It localises to the golgi apparatus membrane. Its function is as follows. Probable beta-1,4-xylosyltransferase involved in xylan biosynthesis in cell walls. The protein is Probable beta-1,4-xylosyltransferase IRX9 of Oryza sativa subsp. japonica (Rice).